The primary structure comprises 434 residues: Enolase (434 aa).

Gln-167 contributes to the (2R)-2-phosphoglycerate binding site. The active-site Proton donor is Glu-209. Positions 246, 291, and 318 each coordinate Mg(2+). The (2R)-2-phosphoglycerate site is built by Lys-343, Arg-372, Ser-373, and Lys-394. Lys-343 (proton acceptor) is an active-site residue.

This sequence belongs to the enolase family. As to quaternary structure, component of the RNA degradosome, a multiprotein complex involved in RNA processing and mRNA degradation. Mg(2+) serves as cofactor.

The protein localises to the cytoplasm. The protein resides in the secreted. Its subcellular location is the cell surface. It carries out the reaction (2R)-2-phosphoglycerate = phosphoenolpyruvate + H2O. Its pathway is carbohydrate degradation; glycolysis; pyruvate from D-glyceraldehyde 3-phosphate: step 4/5. Functionally, catalyzes the reversible conversion of 2-phosphoglycerate (2-PG) into phosphoenolpyruvate (PEP). It is essential for the degradation of carbohydrates via glycolysis. The sequence is that of Enolase from Buchnera aphidicola subsp. Acyrthosiphon pisum (strain APS) (Acyrthosiphon pisum symbiotic bacterium).